The sequence spans 184 residues: Cytidylate kinase (184 aa).

Residue 8-16 (GQPGSGKTT) coordinates ATP.

This sequence belongs to the cytidylate kinase family. Type 2 subfamily.

The protein resides in the cytoplasm. It catalyses the reaction CMP + ATP = CDP + ADP. The catalysed reaction is dCMP + ATP = dCDP + ADP. The chain is Cytidylate kinase from Pyrobaculum arsenaticum (strain DSM 13514 / JCM 11321 / PZ6).